The primary structure comprises 333 residues: Probable ABC transporter permease protein y4mJ (333 aa).

The next 10 helical transmembrane spans lie at 30–50 (LAIA…VPQA), 62–82 (AGAP…TGGI), 84–104 (LSVG…MASG), 110–130 (ALIG…LVTV), 133–153 (LAPF…AFIV), 175–195 (IPGV…IEIF), 228–248 (FAYV…ISYI), 253–273 (STAG…GGAS), 274–294 (LLGG…ITVI), and 300–320 (LIGI…LIAV).

It belongs to the binding-protein-dependent transport system permease family. AraH/RbsC subfamily.

The protein resides in the cell inner membrane. Functionally, probably part of the binding-protein-dependent transport system y4mIJK. This system probably transports a sugar. Probably responsible for the translocation of the substrate across the membrane. The protein is Probable ABC transporter permease protein y4mJ of Sinorhizobium fredii (strain NBRC 101917 / NGR234).